A 74-amino-acid chain; its full sequence is Small ribosomal subunit protein bS21 (74 aa).

It belongs to the bacterial ribosomal protein bS21 family.

The sequence is that of Small ribosomal subunit protein bS21 from Coxiella burnetii (strain Dugway 5J108-111).